The following is a 66-amino-acid chain: Small ribosomal subunit protein bS21A (66 aa).

Residues 34–46 (KHYEKPSVKKKRK) show a composition bias toward basic residues. Residues 34–66 (KHYEKPSVKKKRKQMEAERKRRKAQRFRKPDRD) form a disordered region.

Belongs to the bacterial ribosomal protein bS21 family.

This chain is Small ribosomal subunit protein bS21A, found in Geobacter sulfurreducens (strain ATCC 51573 / DSM 12127 / PCA).